Here is a 249-residue protein sequence, read N- to C-terminus: Triosephosphate isomerase (249 aa).

Asparagine 9 to lysine 11 contacts substrate. The active-site Electrophile is the histidine 95. Glutamate 167 acts as the Proton acceptor in catalysis. Substrate is bound by residues glycine 173, serine 213, and glycine 234–glycine 235.

Belongs to the triosephosphate isomerase family. As to quaternary structure, homodimer.

The protein resides in the cytoplasm. The catalysed reaction is D-glyceraldehyde 3-phosphate = dihydroxyacetone phosphate. It functions in the pathway carbohydrate biosynthesis; gluconeogenesis. The protein operates within carbohydrate degradation; glycolysis; D-glyceraldehyde 3-phosphate from glycerone phosphate: step 1/1. In terms of biological role, involved in the gluconeogenesis. Catalyzes stereospecifically the conversion of dihydroxyacetone phosphate (DHAP) to D-glyceraldehyde-3-phosphate (G3P). This is Triosephosphate isomerase from Solibacter usitatus (strain Ellin6076).